We begin with the raw amino-acid sequence, 326 residues long: 4-hydroxy-3-methylbut-2-enyl diphosphate reductase 1 (326 aa).

Position 27 (C27) interacts with [4Fe-4S] cluster. (2E)-4-hydroxy-3-methylbut-2-enyl diphosphate-binding residues include H56 and H89. Residues H56 and H89 each contribute to the dimethylallyl diphosphate site. H56 and H89 together coordinate isopentenyl diphosphate. C111 serves as a coordination point for [4Fe-4S] cluster. H139 is a binding site for (2E)-4-hydroxy-3-methylbut-2-enyl diphosphate. H139 lines the dimethylallyl diphosphate pocket. An isopentenyl diphosphate-binding site is contributed by H139. E141 serves as the catalytic Proton donor. T179 provides a ligand contact to (2E)-4-hydroxy-3-methylbut-2-enyl diphosphate. [4Fe-4S] cluster is bound at residue C209. Residues S237, S238, N239, and S281 each contribute to the (2E)-4-hydroxy-3-methylbut-2-enyl diphosphate site. The dimethylallyl diphosphate site is built by S237, S238, N239, and S281. Positions 237, 238, 239, and 281 each coordinate isopentenyl diphosphate.

The protein belongs to the IspH family. Requires [4Fe-4S] cluster as cofactor.

It catalyses the reaction isopentenyl diphosphate + 2 oxidized [2Fe-2S]-[ferredoxin] + H2O = (2E)-4-hydroxy-3-methylbut-2-enyl diphosphate + 2 reduced [2Fe-2S]-[ferredoxin] + 2 H(+). The enzyme catalyses dimethylallyl diphosphate + 2 oxidized [2Fe-2S]-[ferredoxin] + H2O = (2E)-4-hydroxy-3-methylbut-2-enyl diphosphate + 2 reduced [2Fe-2S]-[ferredoxin] + 2 H(+). The protein operates within isoprenoid biosynthesis; dimethylallyl diphosphate biosynthesis; dimethylallyl diphosphate from (2E)-4-hydroxy-3-methylbutenyl diphosphate: step 1/1. It functions in the pathway isoprenoid biosynthesis; isopentenyl diphosphate biosynthesis via DXP pathway; isopentenyl diphosphate from 1-deoxy-D-xylulose 5-phosphate: step 6/6. Catalyzes the conversion of 1-hydroxy-2-methyl-2-(E)-butenyl 4-diphosphate (HMBPP) into a mixture of isopentenyl diphosphate (IPP) and dimethylallyl diphosphate (DMAPP). Acts in the terminal step of the DOXP/MEP pathway for isoprenoid precursor biosynthesis. The polypeptide is 4-hydroxy-3-methylbut-2-enyl diphosphate reductase 1 (Burkholderia pseudomallei (strain K96243)).